We begin with the raw amino-acid sequence, 167 residues long: Small ribosomal subunit protein uS5 (167 aa).

Residues 12 to 75 (LQEKLVQVNR…DAARKNMITV (64 aa)) enclose the S5 DRBM domain.

The protein belongs to the universal ribosomal protein uS5 family. In terms of assembly, part of the 30S ribosomal subunit. Contacts proteins S4 and S8.

Its function is as follows. With S4 and S12 plays an important role in translational accuracy. In terms of biological role, located at the back of the 30S subunit body where it stabilizes the conformation of the head with respect to the body. In Hahella chejuensis (strain KCTC 2396), this protein is Small ribosomal subunit protein uS5.